The following is a 303-amino-acid chain: Ribosomal RNA small subunit methyltransferase A (303 aa).

Positions 37, 39, 64, 85, 115, and 138 each coordinate S-adenosyl-L-methionine.

The protein belongs to the class I-like SAM-binding methyltransferase superfamily. rRNA adenine N(6)-methyltransferase family. RsmA subfamily.

The protein resides in the cytoplasm. The catalysed reaction is adenosine(1518)/adenosine(1519) in 16S rRNA + 4 S-adenosyl-L-methionine = N(6)-dimethyladenosine(1518)/N(6)-dimethyladenosine(1519) in 16S rRNA + 4 S-adenosyl-L-homocysteine + 4 H(+). Its function is as follows. Specifically dimethylates two adjacent adenosines (A1518 and A1519) in the loop of a conserved hairpin near the 3'-end of 16S rRNA in the 30S particle. May play a critical role in biogenesis of 30S subunits. The chain is Ribosomal RNA small subunit methyltransferase A from Bifidobacterium adolescentis (strain ATCC 15703 / DSM 20083 / NCTC 11814 / E194a).